The primary structure comprises 640 residues: G protein-coupled receptor kinase 1 (640 aa).

The tract at residues 1–201 is N-terminal; it reads MEIENIVANT…LEKRPVDKHT (201 aa). The RGS domain maps to 52–187; the sequence is YAFVVEKQPI…IQTMYFHRFL (136 aa). Residues 202–469 enclose the Protein kinase domain; that stretch reads FRLYRVLGKG…AEEIRAHPFF (268 aa). ATP contacts are provided by residues 208–216 and lysine 231; that span reads LGKGGFGEV. Catalysis depends on aspartate 327, which acts as the Proton acceptor. In terms of domain architecture, AGC-kinase C-terminal spans 479-544; sequence EPVPWKKMEA…GCVSIPWQSE (66 aa). The segment at 610–640 is disordered; the sequence is GVDQQQPSTSAKPAAVRSSRAASASGRTSMI. The segment covering 619-640 has biased composition (low complexity); the sequence is SAKPAAVRSSRAASASGRTSMI.

Belongs to the protein kinase superfamily. AGC Ser/Thr protein kinase family. GPRK subfamily.

It carries out the reaction [G-protein-coupled receptor] + ATP = [G-protein-coupled receptor]-phosphate + ADP + H(+). Specifically phosphorylates the activated forms of G protein-coupled receptors. The chain is G protein-coupled receptor kinase 1 (grk-1) from Caenorhabditis briggsae.